The sequence spans 370 residues: Ornithine carbamoyltransferase, mitochondrial (370 aa).

Residues 1 to 38 (MPSPLRTAPQPPLRAFHNPPALRRLYSSTSHSAATPAT) constitute a mitochondrion transit peptide. Residues 97-100 (STRT), arginine 148, histidine 175, and glutamine 178 each bind carbamoyl phosphate. Residues asparagine 216, aspartate 282, serine 286, and methionine 287 each contribute to the L-ornithine site. The active-site Proton acceptor is cysteine 324. Residues 324–325 (CL) and arginine 351 contribute to the carbamoyl phosphate site.

It belongs to the aspartate/ornithine carbamoyltransferase superfamily. OTCase family. In terms of assembly, homotrimer.

It localises to the mitochondrion matrix. It catalyses the reaction carbamoyl phosphate + L-ornithine = L-citrulline + phosphate + H(+). It functions in the pathway amino-acid biosynthesis; L-arginine biosynthesis; L-arginine from L-ornithine and carbamoyl phosphate: step 1/3. This Aspergillus niger protein is Ornithine carbamoyltransferase, mitochondrial (argB).